A 603-amino-acid polypeptide reads, in one-letter code: NADH-ubiquinone oxidoreductase chain 5 (603 aa).

The next 17 membrane-spanning stretches (helical) occupy residues 4–24, 38–58, 87–107, 114–134, 140–160, 171–191, 210–230, 241–261, 272–292, 301–320, 325–347, 370–390, 407–429, 457–477, 482–502, 537–557, and 582–602; these read YATMTTLALTSLIPPILTTFI, SIVASTFIISLFPTTMFLCLD, MMFIPVALFVTWSIMEFSLWY, INQFFKYLLIFLITMLILVTA, LFIGWEGVGIMSFLLIGWWYA, AILYNRIGDIGFILALAWFLL, LIPLLGFLLAAAGKSAQLGLH, TPVSALLHSSTMVVAGVFLLI, LAQTLTLCLGAITTLFAAVCA, IVAFSTSSQLGLMVATIGIG, AFLHICTHAFFKAMLFMCSGSII, STSLAIGSLALMGMPFLTGFY, WALSIILIATSLTSAYSTRMILL, LTIGSLFAGFFITNNILPTSV, IPLYLKLTALSITLLGLLTAL, IPYLGLLMSQNLPLLLLDLIW, and GLIKLYFLSFFFPLLLILLLI.

The protein belongs to the complex I subunit 5 family. As to quaternary structure, core subunit of respiratory chain NADH dehydrogenase (Complex I) which is composed of 45 different subunits.

The protein localises to the mitochondrion inner membrane. It carries out the reaction a ubiquinone + NADH + 5 H(+)(in) = a ubiquinol + NAD(+) + 4 H(+)(out). Its function is as follows. Core subunit of the mitochondrial membrane respiratory chain NADH dehydrogenase (Complex I) which catalyzes electron transfer from NADH through the respiratory chain, using ubiquinone as an electron acceptor. Essential for the catalytic activity and assembly of complex I. This is NADH-ubiquinone oxidoreductase chain 5 (MT-ND5) from Gorilla gorilla gorilla (Western lowland gorilla).